A 298-amino-acid chain; its full sequence is ADP-ribosylation factor GTPase-activating protein effector protein 2 (298 aa).

Position 2 is an N-acetylserine (Ser2). The Arf-GAP domain occupies 8–130 (KKALSALLRD…KWIGDLSSIE (123 aa)). The C4-type zinc finger occupies 23 to 47 (CADCKAQLHPRWASWSLGVFICIKC). Positions 137 to 180 (EPVLHKPSANHSLPASNARLDQSSNSLQKTQTQPPSHLLSTSRS) are disordered. The segment covering 145-171 (ANHSLPASNARLDQSSNSLQKTQTQPP) has biased composition (polar residues). Ser180, Ser183, and Ser207 each carry phosphoserine.

The protein localises to the cytoplasm. The protein resides in the golgi apparatus. Its function is as follows. GTPase-activating protein for the ADP ribosylation factor family. This Saccharomyces cerevisiae (strain ATCC 204508 / S288c) (Baker's yeast) protein is ADP-ribosylation factor GTPase-activating protein effector protein 2 (AGE2).